Reading from the N-terminus, the 266-residue chain is Apolipoprotein A-I (266 aa).

The first 18 residues, 1-18, serve as a signal peptide directing secretion; it reads MKAVVLTLAVLFLTGSQA. 2 consecutive repeat copies span residues 67-88 and 89-110. The segment at 67–266 is 10 X approximate tandem repeats; the sequence is LKLLDNWDSL…DEAAKKLNTQ (200 aa). The residue at position 109 (Met109) is a Methionine sulfoxide. The stretch at 111–121 is one 3; half-length repeat; sequence KDLEEVKQKVQ. 5 tandem repeats follow at residues 122–143, 144–165, 166–187, 188–209, and 210–231. One copy of the 9; half-length repeat lies at 232–242; sequence PALEDLRQGLL. Repeat unit 10 spans residues 243–266; that stretch reads PVLESFKVSLLAAVDEAAKKLNTQ.

It belongs to the apolipoprotein A1/A4/E family. In terms of assembly, homodimer. Interacts with APOA1BP and CLU. Component of a sperm activating protein complex (SPAP), consisting of APOA1, an immunoglobulin heavy chain, an immunoglobulin light chain and albumin. Interacts with NDRG1. Interacts with SCGB3A2. Interacts with NAXE and YJEFN3. Post-translationally, glycosylated. Palmitoylated. In terms of processing, phosphorylation sites are present in the extracellular medium.

The protein localises to the secreted. In terms of biological role, participates in the reverse transport of cholesterol from tissues to the liver for excretion by promoting cholesterol efflux from tissues and by acting as a cofactor for the lecithin cholesterol acyltransferase (LCAT). As part of the SPAP complex, activates spermatozoa motility. The sequence is that of Apolipoprotein A-I (APOA1) from Mustela putorius furo (European domestic ferret).